Consider the following 305-residue polypeptide: UDP-3-O-acyl-N-acetylglucosamine deacetylase (305 aa).

Zn(2+)-binding residues include His-79, His-238, and Asp-242. His-265 acts as the Proton donor in catalysis.

The protein belongs to the LpxC family. It depends on Zn(2+) as a cofactor.

It carries out the reaction a UDP-3-O-[(3R)-3-hydroxyacyl]-N-acetyl-alpha-D-glucosamine + H2O = a UDP-3-O-[(3R)-3-hydroxyacyl]-alpha-D-glucosamine + acetate. It participates in glycolipid biosynthesis; lipid IV(A) biosynthesis; lipid IV(A) from (3R)-3-hydroxytetradecanoyl-[acyl-carrier-protein] and UDP-N-acetyl-alpha-D-glucosamine: step 2/6. Catalyzes the hydrolysis of UDP-3-O-myristoyl-N-acetylglucosamine to form UDP-3-O-myristoylglucosamine and acetate, the committed step in lipid A biosynthesis. In Sodalis glossinidius (strain morsitans), this protein is UDP-3-O-acyl-N-acetylglucosamine deacetylase.